Here is a 308-residue protein sequence, read N- to C-terminus: Coenzyme PQQ synthesis protein B (308 aa).

It belongs to the PqqB family.

Its pathway is cofactor biosynthesis; pyrroloquinoline quinone biosynthesis. May be involved in the transport of PQQ or its precursor to the periplasm. The sequence is that of Coenzyme PQQ synthesis protein B from Klebsiella pneumoniae subsp. pneumoniae (strain ATCC 700721 / MGH 78578).